We begin with the raw amino-acid sequence, 84 residues long: Putative membrane protein insertion efficiency factor (84 aa).

Residues 61 to 84 (SQGFEDPLPPNTKRTNLTHGRQTK) are disordered. Over residues 72-84 (TKRTNLTHGRQTK) the composition is skewed to polar residues.

This sequence belongs to the UPF0161 family.

It is found in the cell inner membrane. Functionally, could be involved in insertion of integral membrane proteins into the membrane. The sequence is that of Putative membrane protein insertion efficiency factor from Leptospira borgpetersenii serovar Hardjo-bovis (strain JB197).